Consider the following 243-residue polypeptide: NAD-dependent protein deacylase (243 aa).

The 234-residue stretch at 1 to 234 (MYQHIVVLTG…PKLVDTILAG (234 aa)) folds into the Deacetylase sirtuin-type domain. 10 to 29 (GAGISAESGLRTFRDQDGLW) is an NAD(+) binding site. Substrate-binding residues include Y54 and R57. 91-94 (QNID) contributes to the NAD(+) binding site. H109 (proton acceptor) is an active-site residue. 2 residues coordinate Zn(2+): C117 and C136. NAD(+) contacts are provided by residues 176–178 (GTS), 202–204 (NLQ), and A220.

This sequence belongs to the sirtuin family. Class III subfamily. Zn(2+) is required as a cofactor.

It is found in the cytoplasm. It carries out the reaction N(6)-acetyl-L-lysyl-[protein] + NAD(+) + H2O = 2''-O-acetyl-ADP-D-ribose + nicotinamide + L-lysyl-[protein]. The enzyme catalyses N(6)-succinyl-L-lysyl-[protein] + NAD(+) + H2O = 2''-O-succinyl-ADP-D-ribose + nicotinamide + L-lysyl-[protein]. Functionally, NAD-dependent lysine deacetylase and desuccinylase that specifically removes acetyl and succinyl groups on target proteins. Modulates the activities of several proteins which are inactive in their acylated form. In Shewanella oneidensis (strain ATCC 700550 / JCM 31522 / CIP 106686 / LMG 19005 / NCIMB 14063 / MR-1), this protein is NAD-dependent protein deacylase.